A 293-amino-acid polypeptide reads, in one-letter code: SAGA-associated factor 29 (293 aa).

Residues 3-88 (LVSADSRIAE…KALDKIAEIK (86 aa)) adopt a coiled-coil conformation. An SGF29 C-terminal domain is found at 152 to 293 (GDYVARPGDK…VVACKEPKKK (142 aa)). 2 histone H3K4me3 N-terminus binding regions span residues 194–196 (DID) and 240–243 (QTTC). The interval 264–266 (FED) is histone H3K4me3 binding. K288 is subject to N6-acetyllysine.

It belongs to the SGF29 family. As to quaternary structure, interacts with dimethylated and trimethylated 'Lys-4' of histone H3 (H3K4me2 and H3K4me3), with a preference for the trimethylated form (H3K4me3). Component of some SAGA-type complexes. Component of the ADA2A-containing complex (ATAC), composed of KAT14, KAT2A, TADA2L, TADA3L, ZZ3, MBIP, WDR5, YEATS2, CCDC101 and DR1. Interacts with (methylated) CGAS. Interacts with TADA3L, GCN5L2, SUPT3H and MYC.

Its subcellular location is the nucleus. In terms of biological role, chromatin reader component of some histone acetyltransferase (HAT) SAGA-type complexes like the TFTC-HAT, ATAC or STAGA complexes. SGF29 specifically recognizes and binds methylated 'Lys-4' of histone H3 (H3K4me), with a preference for trimethylated form (H3K4me3). In the SAGA-type complexes, SGF29 is required to recruit complexes to H3K4me. Involved in the response to endoplasmic reticulum (ER) stress by recruiting the SAGA complex to H3K4me, thereby promoting histone H3 acetylation and cell survival. Also binds non-histone proteins that are methylated on Lys residues: specifically recognizes and binds CGAS monomethylated on 'Lys-506'. The polypeptide is SAGA-associated factor 29 (Homo sapiens (Human)).